Here is a 221-residue protein sequence, read N- to C-terminus: Thiamine-phosphate synthase (221 aa).

4-amino-2-methyl-5-(diphosphooxymethyl)pyrimidine contacts are provided by residues 44 to 48 (QFREK) and Asn79. Asp80 and Asp99 together coordinate Mg(2+). Ser117 lines the 4-amino-2-methyl-5-(diphosphooxymethyl)pyrimidine pocket. 2-[(2R,5Z)-2-carboxy-4-methylthiazol-5(2H)-ylidene]ethyl phosphate is bound at residue 143–145 (TRS). Residue Lys146 participates in 4-amino-2-methyl-5-(diphosphooxymethyl)pyrimidine binding. Residues Gly175 and 195-196 (IS) contribute to the 2-[(2R,5Z)-2-carboxy-4-methylthiazol-5(2H)-ylidene]ethyl phosphate site.

Belongs to the thiamine-phosphate synthase family. Mg(2+) is required as a cofactor.

It carries out the reaction 2-[(2R,5Z)-2-carboxy-4-methylthiazol-5(2H)-ylidene]ethyl phosphate + 4-amino-2-methyl-5-(diphosphooxymethyl)pyrimidine + 2 H(+) = thiamine phosphate + CO2 + diphosphate. The catalysed reaction is 2-(2-carboxy-4-methylthiazol-5-yl)ethyl phosphate + 4-amino-2-methyl-5-(diphosphooxymethyl)pyrimidine + 2 H(+) = thiamine phosphate + CO2 + diphosphate. The enzyme catalyses 4-methyl-5-(2-phosphooxyethyl)-thiazole + 4-amino-2-methyl-5-(diphosphooxymethyl)pyrimidine + H(+) = thiamine phosphate + diphosphate. It functions in the pathway cofactor biosynthesis; thiamine diphosphate biosynthesis; thiamine phosphate from 4-amino-2-methyl-5-diphosphomethylpyrimidine and 4-methyl-5-(2-phosphoethyl)-thiazole: step 1/1. Functionally, condenses 4-methyl-5-(beta-hydroxyethyl)thiazole monophosphate (THZ-P) and 2-methyl-4-amino-5-hydroxymethyl pyrimidine pyrophosphate (HMP-PP) to form thiamine monophosphate (TMP). The protein is Thiamine-phosphate synthase of Geobacillus thermodenitrificans (strain NG80-2).